A 1596-amino-acid chain; its full sequence is SET-binding protein (1596 aa).

Over residues 1–12 (MESRETLSSSRQ) the composition is skewed to polar residues. Disordered regions lie at residues 1 to 83 (MESR…WVAG), 134 to 426 (KQSG…SIKA), and 475 to 518 (SPSV…SRKL). Positions 64 to 81 (GSGRDVDSNSNADSEKWV) are enriched in basic and acidic residues. Positions 164-175 (LTASDLAASDLK) are enriched in low complexity. 2 stretches are compositionally biased toward polar residues: residues 213 to 236 (KSSS…QNCF) and 270 to 282 (AGNT…NNNK). Residues 290 to 306 (APSPSSHSSPAPPSSSA) show a composition bias toward low complexity. The segment covering 363-372 (DNTEGKREGY) has biased composition (basic and acidic residues). Polar residues predominate over residues 375 to 395 (DSAQEASPARQNVSSASNPEN). Positions 584–596 (KKKRGRPKKQPLL) form a DNA-binding region, a.T hook 1. Disordered stretches follow at residues 604-624 (GTST…KKRK), 722-763 (YIGK…AVPS), and 777-796 (HPLS…ASTE). Positions 779 to 796 (LSTQLGGSNGNLSPASTE) are enriched in polar residues. An N6-acetyllysine modification is found at lysine 817. The segment covering 854-880 (SPVSESHSEETIPSDSGIGTDNNSTSD) has biased composition (polar residues). Positions 854–889 (SPVSESHSEETIPSDSGIGTDNNSTSDQAEKSSESR) are disordered. Positions 1016–1028 (KKKRGRPAKTNDT) form a DNA-binding region, a.T hook 2. 6 disordered regions span residues 1134 to 1164 (PPKV…DRIL), 1202 to 1225 (EKNK…SKNN), 1245 to 1300 (AKEK…GSKR), 1325 to 1344 (SSYD…KVDQ), 1440 to 1473 (QRQS…DQMP), and 1518 to 1596 (EAPP…EVLP). Basic residues predominate over residues 1146–1159 (RLHKRKHKHKHKHK). Over residues 1450–1459 (VKKRRGRPRK) the composition is skewed to basic residues. The segment at residues 1451-1463 (KKRRGRPRKQPTQ) is a DNA-binding region (a.T hook 3). Tandem repeats lie at residues 1520 to 1527 (PPLPPPPP), 1528 to 1535 (PPLPPPPP), and 1536 to 1543 (PPLPPPPP). Positions 1520–1543 (PPLPPPPPPPLPPPPPPPLPPPPP) are 3 X 8 AA tandem repeats of P-P-L-P-P-P-P-P. Composition is skewed to pro residues over residues 1520 to 1546 (PPLP…PLPK) and 1560 to 1572 (PAQP…PQQP).

As to quaternary structure, interacts with SET. In terms of tissue distribution, expressed in numerous tissues. Expressed at low levels in myeloid and monocytic cells as well as in CD34+ cells; expression levels are higher in myeloid malignancies.

The protein localises to the nucleus. This Homo sapiens (Human) protein is SET-binding protein (SETBP1).